A 263-amino-acid polypeptide reads, in one-letter code: Lens fiber major intrinsic protein (263 aa).

Over 1-9 the chain is Cytoplasmic; sequence MWELRSASF. A helical transmembrane segment spans residues 10 to 29; that stretch reads WRAIFAEFFATLFYVFFGLG. At 30–41 the chain is on the extracellular side; it reads SSLRWAPGPLHV. Residues 42–59 traverse the membrane as a helical segment; sequence LQVAMAFGLALATLVQSV. The Cytoplasmic portion of the chain corresponds to 60-61; that stretch reads GH. The discontinuously helical intramembrane region spans 62–77; it reads ISGAHVNPAVTFAFLV. The NPA 1 motif lies at 68-70; sequence NPA. Residues 78–82 are Cytoplasmic-facing; it reads GSQMS. Residues 83–106 traverse the membrane as a helical segment; that stretch reads LLRAFCYMAAQLLGAVAGAAVLYS. Residues 107–127 are Extracellular-facing; the sequence is VTPPAVRGNLALNTLHPAVSV. The chain crosses the membrane as a helical span at residues 128 to 148; that stretch reads GQATTVEIFLTLQFVLCIFAT. The Cytoplasmic segment spans residues 149–156; it reads YDERRNGQ. A helical transmembrane segment spans residues 157-175; sequence LGSVALAVGFSLALGHLFG. The Extracellular segment spans residues 176 to 178; it reads MYY. The segment at residues 179-193 is an intramembrane region (discontinuously helical); that stretch reads TGAGMNPARSFAPAI. The NPA 2 motif lies at 184–186; that stretch reads NPA. The Extracellular portion of the chain corresponds to 194–200; it reads LTGNFTN. The chain crosses the membrane as a helical span at residues 201–222; that stretch reads HWVYWVGPIIGGGLGSLLYDFL. Residues 223–263 are Cytoplasmic-facing; that stretch reads LFPRLKSISERLSVLKGAKPDVSNGQPEVTGEPVELNTQAL. Positions 227–237 are interaction with CALM; the sequence is LKSISERLSVL. A phosphoserine mark is found at S235 and S245. A deamidated asparagine; by deterioration mark is found at N246 and N259.

It belongs to the MIP/aquaporin (TC 1.A.8) family. In terms of assembly, homotetramer; each monomer provides an independent water pore. Two homotetramers on opposing membranes can dimerize, forming a cell-cell junction. Interacts with CALM; the calcium-calmodulin/CALM complex interacts with the cytoplasmic domains of two aquaporins, leading to channel closure. Interacts with BFSP1 (via C-terminus); prevents calcium-dependent inhibition of the water channel activity. In terms of processing, subject to partial proteolytic cleavage in the eye lens core. Partial proteolysis promotes interactions between tetramers from adjoining membranes. Fatty acylated at Met-1 and Lys-238. The acyl modifications, in decreasing order of ion abundance, are: oleoyl (C18:1) &gt; palmitoyl (C16:0) &gt; stearoyl (C18:0) &gt; eicosenoyl (C20:1) &gt; dihomo-gamma-linolenoyl (C20:3) &gt; palmitoleoyl (C16:1) &gt; eicosadienoyl (C20:2). As to expression, expressed in the cortex and nucleus of the retina lens (at protein level). Major component of lens fiber gap junctions.

Its subcellular location is the cell membrane. The protein resides in the cell junction. It catalyses the reaction H2O(in) = H2O(out). With respect to regulation, the water channel activity is inhibited by calcium through calmodulin/CALM. Aquaporins form homotetrameric transmembrane channels, with each monomer independently mediating water transport across the plasma membrane along its osmotic gradient. Specifically expressed in lens fiber cells, this aquaporin is crucial for maintaining lens water homeostasis and transparency. Beyond water permeability, it also acts as a cell-to-cell adhesion molecule, forming thin junctions between lens fiber cells that are essential for maintaining the ordered structure and transparency of the lens. The polypeptide is Lens fiber major intrinsic protein (Homo sapiens (Human)).